The chain runs to 99 residues: Aspartyl/glutamyl-tRNA(Asn/Gln) amidotransferase subunit C (99 aa).

It belongs to the GatC family. Heterotrimer of A, B and C subunits.

The enzyme catalyses L-glutamyl-tRNA(Gln) + L-glutamine + ATP + H2O = L-glutaminyl-tRNA(Gln) + L-glutamate + ADP + phosphate + H(+). The catalysed reaction is L-aspartyl-tRNA(Asn) + L-glutamine + ATP + H2O = L-asparaginyl-tRNA(Asn) + L-glutamate + ADP + phosphate + 2 H(+). Its function is as follows. Allows the formation of correctly charged Asn-tRNA(Asn) or Gln-tRNA(Gln) through the transamidation of misacylated Asp-tRNA(Asn) or Glu-tRNA(Gln) in organisms which lack either or both of asparaginyl-tRNA or glutaminyl-tRNA synthetases. The reaction takes place in the presence of glutamine and ATP through an activated phospho-Asp-tRNA(Asn) or phospho-Glu-tRNA(Gln). The polypeptide is Aspartyl/glutamyl-tRNA(Asn/Gln) amidotransferase subunit C (Corynebacterium efficiens (strain DSM 44549 / YS-314 / AJ 12310 / JCM 11189 / NBRC 100395)).